The following is a 679-amino-acid chain: Glycine--tRNA ligase beta subunit (679 aa).

It belongs to the class-II aminoacyl-tRNA synthetase family. As to quaternary structure, tetramer of two alpha and two beta subunits.

The protein localises to the cytoplasm. The catalysed reaction is tRNA(Gly) + glycine + ATP = glycyl-tRNA(Gly) + AMP + diphosphate. This is Glycine--tRNA ligase beta subunit from Streptococcus agalactiae serotype V (strain ATCC BAA-611 / 2603 V/R).